A 259-amino-acid polypeptide reads, in one-letter code: Proteasome subunit alpha (259 aa).

The protein belongs to the peptidase T1A family. As to quaternary structure, the 20S proteasome core is composed of 14 alpha and 14 beta subunits that assemble into four stacked heptameric rings, resulting in a barrel-shaped structure. The two inner rings, each composed of seven catalytic beta subunits, are sandwiched by two outer rings, each composed of seven alpha subunits. The catalytic chamber with the active sites is on the inside of the barrel. Has a gated structure, the ends of the cylinder being occluded by the N-termini of the alpha-subunits. Is capped at one or both ends by the proteasome regulatory ATPase, PAN.

The protein resides in the cytoplasm. With respect to regulation, the formation of the proteasomal ATPase PAN-20S proteasome complex, via the docking of the C-termini of PAN into the intersubunit pockets in the alpha-rings, triggers opening of the gate for substrate entry. Interconversion between the open-gate and close-gate conformations leads to a dynamic regulation of the 20S proteasome proteolysis activity. In terms of biological role, component of the proteasome core, a large protease complex with broad specificity involved in protein degradation. This chain is Proteasome subunit alpha, found in Methanococcus maripaludis (strain C5 / ATCC BAA-1333).